We begin with the raw amino-acid sequence, 653 residues long: ATP-dependent zinc metalloprotease FtsH 1 (653 aa).

Residues Met-1–Lys-20 form a disordered region. At Met-1–Asn-30 the chain is on the cytoplasmic side. A helical transmembrane segment spans residues Ile-31–Trp-51. Residues Glu-52–Trp-126 are Periplasmic-facing. A helical membrane pass occupies residues Trp-127 to Leu-147. The Cytoplasmic portion of the chain corresponds to Tyr-148–Val-653. Gly-219–Thr-226 is a binding site for ATP. Position 441 (His-441) interacts with Zn(2+). Glu-442 is a catalytic residue. Residues His-445 and Asp-518 each contribute to the Zn(2+) site.

In the central section; belongs to the AAA ATPase family. This sequence in the C-terminal section; belongs to the peptidase M41 family. Homohexamer. Requires Zn(2+) as cofactor.

The protein resides in the cell inner membrane. Acts as a processive, ATP-dependent zinc metallopeptidase for both cytoplasmic and membrane proteins. Plays a role in the quality control of integral membrane proteins. In Petrotoga mobilis (strain DSM 10674 / SJ95), this protein is ATP-dependent zinc metalloprotease FtsH 1.